Here is a 373-residue protein sequence, read N- to C-terminus: Anhydro-N-acetylmuramic acid kinase (373 aa).

An ATP-binding site is contributed by 12–19 (GTSLDGVD).

It belongs to the anhydro-N-acetylmuramic acid kinase family.

It carries out the reaction 1,6-anhydro-N-acetyl-beta-muramate + ATP + H2O = N-acetyl-D-muramate 6-phosphate + ADP + H(+). Its pathway is amino-sugar metabolism; 1,6-anhydro-N-acetylmuramate degradation. The protein operates within cell wall biogenesis; peptidoglycan recycling. In terms of biological role, catalyzes the specific phosphorylation of 1,6-anhydro-N-acetylmuramic acid (anhMurNAc) with the simultaneous cleavage of the 1,6-anhydro ring, generating MurNAc-6-P. Is required for the utilization of anhMurNAc either imported from the medium or derived from its own cell wall murein, and thus plays a role in cell wall recycling. In Salmonella paratyphi A (strain ATCC 9150 / SARB42), this protein is Anhydro-N-acetylmuramic acid kinase.